The following is a 925-amino-acid chain: Serine/threonine-protein phosphatase 1 regulatory subunit 10 (925 aa).

Residues 1–348 form an interaction with TOX4 region; it reads MGSGPIDPKE…EPAPPSEAMD (348 aa). The 75-residue stretch at 73–147 folds into the TFIIS N-terminal domain; sequence KLLNNWLTYS…SDWMAVIRSQ (75 aa). The segment at 147–211 is disordered; sequence QSSTQPAEKD…APSHAKFRST (65 aa). Basic and acidic residues-rich tracts occupy residues 153-166 and 174-196; these read AEKDKKKRKEEGKS and PLTEVKAETRAEEAPEKKREKPK. Glycyl lysine isopeptide (Lys-Gly) (interchain with G-Cter in SUMO2) cross-links involve residues lysine 179 and lysine 262. Disordered stretches follow at residues 304-398, 536-555, and 587-890; these read KIKK…KRKT, TLEPGGAGGSPDGAGGSKLP, and SIMG…HGGD. A Phosphoserine modification is found at serine 313. The segment covering 325–336 has biased composition (low complexity); that stretch reads KTSTEPSTAKPS. Residues 357 to 433 form a necessary for interaction with PPP1CA region; that stretch reads PPVEVPELMD…NKIKDFGEAA (77 aa). Serine 382 is modified (phosphoserine). Residues 393 to 408 are necessary for interaction with PPP1CC; that stretch reads GRKRKTVTWPEEGKLR. The PP1-binding motif motif lies at 394–423; it reads RKRKTVTWPEEGKLREYFYFELDETERVNV. Phosphothreonine; by PKA is present on threonine 398. The interaction with WDR82 stretch occupies residues 418-619; that stretch reads TERVNVNKIK…IKQMLVPHGL (202 aa). Residues 540-551 are compositionally biased toward gly residues; that stretch reads GGAGGSPDGAGG. Phosphoserine is present on residues serine 545 and serine 591. Residues 596-611 are compositionally biased toward basic and acidic residues; it reads PSEELLKQPDYSDKIK. Pro residues predominate over residues 644 to 655; sequence PPGPGGPMPGPH. A compositionally biased stretch (gly residues) spans 656 to 665; that stretch reads GGPGGPGGPV. Position 668 is an omega-N-methylarginine (arginine 668). Low complexity predominate over residues 679–693; the sequence is GDPFWDGPGDPMRGG. Residues arginine 696 and arginine 741 each carry the omega-N-methylarginine modification. Gly residues-rich tracts occupy residues 728-766 and 775-829; these read ARGGRSGGGPPNGRGGPGGGMVGGGGHRPHEGPGGGMSS and GPGG…AGGG. 2 stretches are compositionally biased toward basic and acidic residues: residues 846 to 871 and 879 to 890; these read PHDVPGHRGHDHRGPPPHEHRGHDGP and RGHDGGHNHGGD. The C3H1-type zinc-finger motif lies at 891-919; that stretch reads MSKRPVCRHFMMKGNCRYENNCAFYHPGV.

In terms of assembly, component of the PNUTS-PP1 complex (also named PTW/PP1 complex), composed of PPP1R10/PNUTS, TOX4, WDR82, and PPP1CA (or PPP1CB or PPP1CC). Phosphorylated on Ser-398 by PKA within the region necessary for interaction with PPP1CA.

It is found in the nucleus. Its subcellular location is the chromosome. Substrate-recognition component of the PNUTS-PP1 protein phosphatase complex, a protein phosphatase 1 (PP1) complex that promotes RNA polymerase II transcription pause-release, allowing transcription elongation. Promoter-proximal pausing by RNA polymerase II is a transcription halt following transcription initiation but prior to elongation, which acts as a checkpoint to control that transcripts are favorably configured for transcriptional elongation. The PNUTS-PP1 complex mediates the release of RNA polymerase II from promoter-proximal region of genes by catalyzing dephosphorylation of proteins involved in transcription, such as AFF4, CDK9, MEPCE, INTS12, NCBP1, POLR2M/GDOWN1 and SUPT6H. The PNUTS-PP1 complex also regulates RNA polymerase II transcription termination by mediating dephosphorylation of SUPT5H in termination zones downstream of poly(A) sites, thereby promoting deceleration of RNA polymerase II transcription. PNUTS-PP1 complex is also involved in the response to replication stress by mediating dephosphorylation of POLR2A at 'Ser-5' of the CTD, promoting RNA polymerase II degradation. The PNUTS-PP1 complex also plays a role in the control of chromatin structure and cell cycle progression during the transition from mitosis into interphase. PNUTS-PP1 complex mediates dephosphorylation of MYC, promoting MYC stability by preventing MYC ubiquitination by the SCF(FBXW7) complex. In addition to acts as a substrate-recognition component, PPP1R10/PNUTS also acts as a nuclear targeting subunit for the PNUTS-PP1 complex. In some context, PPP1R10/PNUTS also acts as an inhibitor of protein phosphatase 1 (PP1) activity by preventing access to substrates, such as RB. The sequence is that of Serine/threonine-protein phosphatase 1 regulatory subunit 10 (PPP1R10) from Sus scrofa (Pig).